A 757-amino-acid chain; its full sequence is MSESTYPSVKDLTLEEKASLTSGGDAWHLQGVESKGIPGYMITDGPHGLRKSLASSAGETDLDDSVPATCFPPAAGLSSSWNPELIHKVGEAMAEECIQEKVAVILGPGVNIKRNPLGGRCFEYWSEDPYLAGHEAIGIVEGVQSKGVGTSLKHFAANNQESDRLRVDARISPRALREIYFPAFEHIVKKAQPWTIMCSYNRINGVHSAQNHWLLTDVLRDEWGFEGIVMSDWGADHDRGASLNAGLNLEMPPSYTDDQIVYAVRDGRITPAQLDRMAQGMIDLVNKTRAAMSIDNYRFDVDAHDEVAHQAAIESIVMLKNDDAILPLNAGPVANPSAMPQKIAVIGEFARTPRYQGGGSSHITPTKMTSFLDTLAERGIKADFAPGFTLDLEPADPALESEAVETAKNADVVLMFLGLPEAAESEGFDRDTLDMPAKQITLLEQVAAANQNVVVVLSNGSVITVAPWAKNAKGILESWLLGQSGGPALADVIFGQVSPSGKLAQSIPLDINDDPSMTNWPGEEGHVDYGEGVFVGYRYYDTYGKAVDCPFGYGLSYATFEITGVAVAKTGANTATVNATVTNTSDVDAAETVQVYVAPGKADVARPKHELKGFTKVFLKSGESKTVTIDLDERAFAYWSEKYNDWHVESGEYAIEVGTSSRDIAETVTVALEGDGKTQPLTEWSTYGEWEADPFGAKIVAAVAAAGEAGELPKLPDNAMMRMFLNSMPINSLPTLLGEGGKKIAQFMVDEYAKLSK.

D232 is an active-site residue.

This sequence belongs to the glycosyl hydrolase 3 family. In terms of assembly, homotetramer.

Completely inhibited by Cu(2+) and Fe(2+). In terms of biological role, catalyzes the hydrolysis of a non-reducing terminal alpha-L-arabinopyranosidic linkage in ginsenoside Rb2 (alpha-L-arabinopyranosyl-(1-&gt;6)-alpha-D-glucopyranosyl) to release alpha-D-glucopyranosyl (Rd). It is not able to hydrolyze alpha-L-arabinofuranosyl-(1-&gt;6)-alpha-D-glucopyranosyl (Rc). In Bifidobacterium breve (strain ACS-071-V-Sch8b), this protein is Exo-alpha-(1-&gt;6)-L-arabinopyranosidase.